The following is a 1088-amino-acid chain: Leucine-rich repeat receptor-like protein kinase PEPR2 (1088 aa).

The signal sequence occupies residues 1-26 (MRNLGLLEITLLCSLFVYFRIDSVSS). Residues 27 to 739 (LNSDGLALLS…QVKLSTWKIA (713 aa)) lie on the Extracellular side of the membrane. N-linked (GlcNAc...) asparagine glycosylation is found at N55, N82, and N122. LRR repeat units lie at residues 75-99 (GNVVETLNLSASGLSGQLGSEIGEL), 100-122 (KSLVTLDLSLNSFSGLLPSTLGN), 123-146 (CTSLEYLDLSNNDFSGEVPDIFGS), 147-170 (LQNLTFLYLDRNNLSGLIPASVGG), 172-194 (IELVDLRMSYNNLSGTIPELLGN), 195-219 (CSKLEYLALNNNKLNGSLPASLYLL), 221-243 (NLGELFVSNNSLGGRLHFGSSNC), 244-267 (KKLVSLDLSFNDFQGGVPPEIGNC), 269-291 (SLHSLVMVKCNLTGTIPSSMGML), 292-315 (RKVSVIDLSDNRLSGNIPQELGNC), 316-339 (SSLETLKLNDNQLQGEIPPALSKL), 341-363 (KLQSLELFFNKLSGEIPIGIWKI), 365-387 (SLTQMLVYNNTLTGELPVEVTQL), 388-411 (KHLKKLTLFNNGFYGDIPMSLGLN), 412-435 (RSLEEVDLLGNRFTGEIPPHLCHG), 436-459 (QKLRLFILGSNQLHGKIPASIRQC), 460-485 (KTLERVRLEDNKLSGVLPEFPESLSL), 487-506 (YVNLGSNSFEGSIPRSLGSC), 507-529 (KNLLTIDLSQNKLTGLIPPELGN), 530-554 (LQSLGLLNLSHNYLEGPLPSQLSGC), 556-577 (RLLYFDVGSNSLNGSIPSSFRS), 578-602 (WKSLSTLVLSDNNFLGAIPQFLAEL), 603-627 (DRLSDLRIARNAFGGKIPSSVGLLK), 629-651 (LRYGLDLSANVFTGEIPTTLGAL), 652-676 (INLERLNISNNKLTGPLSVLQSLKS), and 678-698 (NQVDVSYNQFTGPIPVNLLSN). N-linked (GlcNAc...) asparagine glycans are attached at residues N149, N159, N183, N194, N209, N229, N266, N279, and N314. 2 N-linked (GlcNAc...) asparagine glycosylation sites follow: N373 and N411. Residues N537 and N568 are each glycosylated (N-linked (GlcNAc...) asparagine). 2 N-linked (GlcNAc...) asparagine glycosylation sites follow: N658 and N698. The helical transmembrane segment at 740 to 760 (LIAAGSSLSVLALLFALFLVL) threads the bilayer. Topologically, residues 761-1088 (CRCKRGTKTE…FVRSTSGSVH (328 aa)) are cytoplasmic. At T791 the chain carries Phosphothreonine. Residues 794–1080 (LDDKYIIGRG…KDLTDLESFV (287 aa)) enclose the Protein kinase domain. ATP-binding positions include 800 to 808 (IGRGAHGVV) and K822. Phosphotyrosine is present on residues Y868 and Y908. The Proton acceptor role is filled by D921. Y962 and Y969 each carry phosphotyrosine.

It belongs to the protein kinase superfamily. Ser/Thr protein kinase family. Interacts with BAK1. Interacts with CLE14.

It is found in the cell membrane. It carries out the reaction L-seryl-[protein] + ATP = O-phospho-L-seryl-[protein] + ADP + H(+). The enzyme catalyses L-threonyl-[protein] + ATP = O-phospho-L-threonyl-[protein] + ADP + H(+). Acts as a receptor for PEP defense peptides. Unlike typical immune receptors, senses an endogenous elicitor that potentiates PAMP-inducible plant responses. This is Leucine-rich repeat receptor-like protein kinase PEPR2 (PEPR2) from Arabidopsis thaliana (Mouse-ear cress).